The primary structure comprises 820 residues: Sodium/hydrogen exchanger 1 (820 aa).

Residues 1–102 (MMLRWSGIWG…FPVLDIDYLH (102 aa)) are Extracellular-facing. Residues 44–71 (ASTIRGSEPPRERSIGDVTTAPSEPLHH) are disordered. A helical transmembrane segment spans residues 103 to 125 (VRTPFEISLWILLACLMKIGFHV). Residues 126–134 (IPTISSIVP) are Cytoplasmic-facing. A helical transmembrane segment spans residues 135-152 (ESCLLIVVGLLVGGLIKG). Residues 153 to 162 (VGETPPFLQS) are Extracellular-facing. The helical transmembrane segment at 163-180 (DVFFLFLLPPIILDAGYF) threads the bilayer. Over 181–190 (LPLRQFTENL) the chain is Cytoplasmic. The chain crosses the membrane as a helical span at residues 191–219 (GTILIFAVVGTLWNAFFLGGLLYAVCLVG). Residues 220–226 (GEQINNI) are Extracellular-facing. The chain crosses the membrane as a helical span at residues 227 to 253 (GLLDTLLFGSIISAVDPVAVLAVFEEI). Residues 254–256 (HIN) lie on the Cytoplasmic side of the membrane. A helical transmembrane segment spans residues 257-287 (ELLHILVFGESLLNDAVTVVLYHLFEEFASY). Residues 288–291 (EYVG) lie on the Extracellular side of the membrane. A helical membrane pass occupies residues 292-326 (ISDIFLGFLSFFVVSLGGVFVGVVYGVIAAFTSRF). Over 327–332 (TSHIRV) the chain is Cytoplasmic. A helical transmembrane segment spans residues 333–345 (IEPLFVFLYSYMA). Residues 346-354 (YLSAELFHL) lie on the Extracellular side of the membrane. The helical transmembrane segment at 355 to 375 (SGIMALIASGVVMRPYVEANI) threads the bilayer. Over 376–377 (SH) the chain is Cytoplasmic. Residues 378-408 (KSHTTIKYFLKMWSSVSETLIFIFLGVSTVA) traverse the membrane as a helical segment. Residues 409 to 414 (GSHQWN) are Extracellular-facing. The chain crosses the membrane as a helical span at residues 415-442 (WTFVISTLLFCLIARVLGVLVLTWFINK). The Cytoplasmic portion of the chain corresponds to 443 to 448 (FRIVKL). A helical membrane pass occupies residues 449–473 (TPKDQFIIAYGGLRGAIAFSLGYLL). The Extracellular portion of the chain corresponds to 474-479 (DKKHFP). A helical transmembrane segment spans residues 480 to 509 (MCDLFLTAIITVIFFTVFVQGMTIRPLVDL). The interval 505-571 (PLVDLLAVKK…VKKCLIAGER (67 aa)) is interaction with TESC. At 510–820 (LAVKKKQETK…EGEPFIPKGQ (311 aa)) the chain is on the cytoplasmic side. The interval 513 to 520 (KKKQETKR) is PI(4,5)P2-binding region. The tract at residues 519–549 (KRSINEEIHTQFLDHLLTGIEDICGHYGHHH) is interaction with CHP2. The interval 544–549 (HYGHHH) is confers pH-dependent PI(4,5)P2 binding. The segment at 556-564 (RFNKKYVKK) is PI(4,5)P2-binding region. 2 positions are modified to phosphoserine: S603 and S606. Residue T607 is modified to Phosphothreonine. S609 and S652 each carry phosphoserine. The interaction with TESC stretch occupies residues 637–820 (KILRSNLQKT…EGEPFIPKGQ (184 aa)). Residues 637-820 (KILRSNLQKT…EGEPFIPKGQ (184 aa)) form an interaction with CALM1 region. Residues 688–691 (LTVP) form an interaction with PPP3CA region. S697, S701, and S707 each carry phosphoserine. An interaction with PPP3CA region spans residues 719 to 724 (PVITID). Residues S727, S730, and S733 each carry the phosphoserine modification. The segment at 747-820 (GLKRGPRTTP…EGEPFIPKGQ (74 aa)) is disordered. Residues T755 and T784 each carry the phosphothreonine modification. 2 positions are modified to phosphoserine: S790 and S801.

Belongs to the monovalent cation:proton antiporter 1 (CPA1) transporter (TC 2.A.36) family. In terms of assembly, homodimer; dimerization is crucial for its function. Oligomer. Interacts with CALM1 in a calcium-dependent manner. Interacts with TESC. Interacts (via residues 504-563) with CHP1. The interaction with CHP1 occurs at the plasma membrane in a calcium-dependent manner. Interacts with CHP2. The interaction with CHP2 occurs in a calcium-dependent manner. Interacts with EZR; regulates the cytoskeletal interactions of SLC9A1 and promotes stress fiber formation. N-glycosylated and O-glycosylated in the N-terminal region. Post-translationally, ubiquitinated, leading to its degradation by the proteasome. Ubiquitination is reduced by CHP1. In terms of processing, palmitoylated; may play a major role in SLC9A1 regulation. Phosphorylation at Thr-784 increases SLC9A1 activity; specifically dephosphorylated by PPP3CA. Specifically dephosphorylated at Thr-784 by PPP3CA that negatively regulates SLC9A1 activity. Phosphorylation at Ser-652 by AKT1 reduces SLC9A1 binding to CALM1. As to expression, widely expressed.

It is found in the cell membrane. The protein resides in the basolateral cell membrane. It catalyses the reaction Na(+)(in) + H(+)(out) = Na(+)(out) + H(+)(in). The catalysed reaction is Li(+)(out) + H(+)(in) = Li(+)(in) + H(+)(out). The enzyme catalyses Li(+)(in) + Na(+)(out) = Li(+)(out) + Na(+)(in). Activated at acidic pHs. Inhibited by cariporide and eniporide. Inhibited by amiloride and 5-amino-substituted derivatives. Phosphatidylinositol 4,5-bisphosphate (PI(4,5)P2) bind and activates SLC9A1 transporter activity. Electroneutral Na(+) /H(+) antiporter that extrudes Na(+) in exchange for external protons driven by the inward sodium ion chemical gradient, protecting cells from acidification that occurs from metabolism. Exchanges intracellular H(+) ions for extracellular Na(+) in 1:1 stoichiometry. Plays a key role in maintening intracellular pH neutral and cell volume, and thus is important for cell growth, proliferation, migration and survival. In addition, can transport lithium Li(+) and also functions as a Na(+)/Li(+) antiporter. SLC9A1 also functions in membrane anchoring and organization of scaffolding complexes that coordinate signaling inputs. This chain is Sodium/hydrogen exchanger 1 (Slc9a1), found in Rattus norvegicus (Rat).